The following is a 227-amino-acid chain: MTNNLSGYRNKFVRVKTSKKRTVSSSNWLRRQLNDPYVAKARIEGFRSRAAYKLLEIHEKFKIFTPNMKVVDLGAAPGGWSQVASKLIKATDGNLKNKIISVDLLEIEPIPGVESFQKDFFEKDTEELIIQALKGKADIVLSDMASNTIGHKATDHIRTLLLCEQAFEFALKVLNPSGHFIAKIFRGGAENELLNKVKREFSTVKHFKPSSSRKESTEIYLVALNRK.

S-adenosyl-L-methionine contacts are provided by G78, W80, D103, D119, and D143. K183 acts as the Proton acceptor in catalysis.

The protein belongs to the class I-like SAM-binding methyltransferase superfamily. RNA methyltransferase RlmE family.

It is found in the cytoplasm. The enzyme catalyses uridine(2552) in 23S rRNA + S-adenosyl-L-methionine = 2'-O-methyluridine(2552) in 23S rRNA + S-adenosyl-L-homocysteine + H(+). In terms of biological role, specifically methylates the uridine in position 2552 of 23S rRNA at the 2'-O position of the ribose in the fully assembled 50S ribosomal subunit. This chain is Ribosomal RNA large subunit methyltransferase E, found in Rickettsia bellii (strain RML369-C).